A 676-amino-acid chain; its full sequence is Cysteine-rich receptor-like protein kinase 4 (676 aa).

The signal sequence occupies residues 1 to 16 (MSFFWLFPFLLHLSFA). Topologically, residues 17-287 (DSLSPLSAPV…ISERGKGRNS (271 aa)) are extracellular. Gnk2-homologous domains are found at residues 31–135 (HLNH…HRNI) and 146–246 (ILLN…NYSF). Asn-33, Asn-46, Asn-64, Asn-152, Asn-181, Asn-243, and Asn-248 each carry an N-linked (GlcNAc...) asparagine glycan. Residues 252-279 (TRSSSPPSLPPRSTPQQQLKLAPPPLIS) form a disordered region. Asn-286 carries an N-linked (GlcNAc...) asparagine glycan. The helical transmembrane segment at 288–308 (SVIIVVVVPIIALLLLFVAFF) threads the bilayer. Over 309 to 676 (SLRAKKTRTN…DASITNVTPR (368 aa)) the chain is Cytoplasmic. Residues 351 to 631 (FCETNKLGQG…QMLTTSSIAL (281 aa)) form the Protein kinase domain. ATP contacts are provided by residues 357 to 365 (LGQGGFGEV) and Lys-379. Tyr-424 bears the Phosphotyrosine mark. Asp-476 acts as the Proton acceptor in catalysis. Thr-516 bears the Phosphothreonine mark. Position 524 is a phosphotyrosine (Tyr-524).

This sequence belongs to the protein kinase superfamily. Ser/Thr protein kinase family. CRK subfamily.

It localises to the membrane. It catalyses the reaction L-seryl-[protein] + ATP = O-phospho-L-seryl-[protein] + ADP + H(+). The enzyme catalyses L-threonyl-[protein] + ATP = O-phospho-L-threonyl-[protein] + ADP + H(+). The protein is Cysteine-rich receptor-like protein kinase 4 (CRK4) of Arabidopsis thaliana (Mouse-ear cress).